Consider the following 856-residue polypeptide: Serine/threonine-protein phosphatase 6 regulatory subunit 1 (856 aa).

The interaction with PPP6C stretch occupies residues 10-403; it reads SSHLDTLLEK…VFNNFLHAQV (394 aa). Ser-232 carries the post-translational modification Phosphoserine. Thr-524 bears the Phosphothreonine mark. A phosphoserine mark is found at Ser-529, Ser-530, and Ser-531. Residues 621-630 show a composition bias toward acidic residues; sequence DDEEEEEEEG. Disordered regions lie at residues 621 to 770 and 792 to 856; these read DDEE…KVAE and RSAP…SGSQ. Ser-633 and Ser-636 each carry phosphoserine. Over residues 644 to 656 the composition is skewed to polar residues; it reads QGSQPVRASQASQ. Acidic residues predominate over residues 667–683; that stretch reads DSEEEDEEEDEEEDEGA. Phosphoserine is present on residues Ser-698 and Ser-739. Polar residues predominate over residues 794–809; that stretch reads APSSLDSATRDPSTSV. At Ser-826 the chain carries Phosphoserine. Residues 842-856 show a composition bias toward low complexity; it reads PNGSTPGGPISSGSQ.

It belongs to the SAPS family. In terms of assembly, protein phosphatase 6 (PP6) holoenzyme is proposed to be a heterotrimeric complex formed of the catalytic subunit, a SAPS domain-containing subunit (PP6R) and an ankyrin repeat-domain containing regulatory subunit (ARS). Interacts with PPP6C and NFKBIE. Interacts with ANKRD28, ANKRD44 and ANKRD52. As to expression, ubiquitous with highest expression in lung, spleen and bladder.

It localises to the cytoplasm. Functionally, regulatory subunit of protein phosphatase 6 (PP6). May function as a scaffolding PP6 subunit. Involved in the PP6-mediated dephosphorylation of NFKBIE opposing its degradation in response to TNF-alpha. This is Serine/threonine-protein phosphatase 6 regulatory subunit 1 (Ppp6r1) from Mus musculus (Mouse).